The chain runs to 421 residues: Vasopressin V1b receptor (421 aa).

The Extracellular segment spans residues 1-35 (MDSEPSWTATPSPGGTLFVPNTTTPWLGRDEELAK). Asparagine 21 carries N-linked (GlcNAc...) asparagine glycosylation. The chain crosses the membrane as a helical span at residues 36-59 (VEIGILATVLVLATGGNLAVLLIL). Residues 60 to 71 (GLQGHKRSRMHL) lie on the Cytoplasmic side of the membrane. Residues 72-93 (FVLHLALTDLGVALFQVLPQLL) traverse the membrane as a helical segment. At 94-108 (WDITYRFQGSDLLCR) the chain is on the extracellular side. Residues cysteine 107 and cysteine 186 are joined by a disulfide bond. A helical membrane pass occupies residues 109–130 (AVKYLQVLSMFASTYMLLAMTL). Residues 131–151 (DRYLAVCHPLRSLQQPSQSTY) are Cytoplasmic-facing. A helical membrane pass occupies residues 152 to 173 (PLIAAPWLLAAILSLPQVFIFS). Residues 174 to 202 (LREVIQGSGVLDCWADFYFSWGPRAYITW) lie on the Extracellular side of the membrane. The chain crosses the membrane as a helical span at residues 203 to 223 (TTMAIFVLPVVVLTACYGLIC). Topologically, residues 224–280 (HEIYKNLKVKTQAGREERRGWPKSSSSAAAAATRGLPSRVSSISTISRAKIRTVKMT) are cytoplasmic. Residues 281–300 (FVIVLAYIACWAPFFSVQMW) traverse the membrane as a helical segment. Residues 301–318 (SVWDENAPNEDSTNVAFT) lie on the Extracellular side of the membrane. The chain crosses the membrane as a helical span at residues 319 to 338 (ISMLLGNLSSCCNPWIYMGF). Topologically, residues 339-421 (NSHLLPRSLS…GEATMETSIS (83 aa)) are cytoplasmic. Residues 399–421 (KPAGSLKDLEQVDGEATMETSIS) are disordered.

This sequence belongs to the G-protein coupled receptor 1 family. Vasopressin/oxytocin receptor subfamily.

The protein localises to the cell membrane. Its function is as follows. Receptor for arginine vasopressin. The activity of this receptor is mediated by G proteins which activate a phosphatidyl-inositol-calcium second messenger system. The sequence is that of Vasopressin V1b receptor (Avpr1b) from Mus musculus (Mouse).